The primary structure comprises 395 residues: Nicotinate phosphoribosyltransferase (395 aa).

His222 carries the post-translational modification Phosphohistidine; by autocatalysis.

It belongs to the NAPRTase family. In terms of processing, transiently phosphorylated on a His residue during the reaction cycle. Phosphorylation strongly increases the affinity for substrates and increases the rate of nicotinate D-ribonucleotide production. Dephosphorylation regenerates the low-affinity form of the enzyme, leading to product release.

The catalysed reaction is nicotinate + 5-phospho-alpha-D-ribose 1-diphosphate + ATP + H2O = nicotinate beta-D-ribonucleotide + ADP + phosphate + diphosphate. It participates in cofactor biosynthesis; NAD(+) biosynthesis; nicotinate D-ribonucleotide from nicotinate: step 1/1. Functionally, catalyzes the synthesis of beta-nicotinate D-ribonucleotide from nicotinate and 5-phospho-D-ribose 1-phosphate at the expense of ATP. The sequence is that of Nicotinate phosphoribosyltransferase from Polaromonas sp. (strain JS666 / ATCC BAA-500).